Here is a 263-residue protein sequence, read N- to C-terminus: LIM and SH3 domain protein 1 (263 aa).

N-acetylmethionine is present on Met1. Residues 5–56 (CARCGKIVYPTEKVNCLDKYWHKACFHCETCKMTLNMKNYKGYEKKPYCNAH) form the LIM zinc-binding domain. At Lys42 the chain carries N6-acetyllysine. 2 Nebulin repeats span residues 61–95 (SFTM…KNKG) and 97–131 (GFSV…KSRM). Thr68 carries the post-translational modification Phosphothreonine. An N6-methyllysine modification is found at Lys75. Ser99 is subject to Phosphoserine. Position 104 is a phosphothreonine (Thr104). Lys112 carries the N6-succinyllysine modification. Ser118 and Ser134 each carry phosphoserine. A disordered region spans residues 123-207 (HEEFEKSRMG…QRSAPGGGGK (85 aa)). Residues 148–162 (DSSSYRRPTEQQQPQ) are compositionally biased toward polar residues. Thr156 is modified (phosphothreonine; by PKA). Residues 204 to 263 (GGGKRYRAVYDYSAADEDEVSFQDGDTIVNVQQIDDGWMYGTVERTGDTGMLPANYVEAI) form the SH3 domain.

As to quaternary structure, interacts with F-actin. Interacts with KBTBD10. Interacts with ANKRD54.

It localises to the cytoplasm. The protein localises to the cell cortex. The protein resides in the cytoskeleton. Functionally, plays an important role in the regulation of dynamic actin-based, cytoskeletal activities. Agonist-dependent changes in LASP1 phosphorylation may also serve to regulate actin-associated ion transport activities, not only in the parietal cell but also in certain other F-actin-rich secretory epithelial cell types. This is LIM and SH3 domain protein 1 (Lasp1) from Mus musculus (Mouse).